A 207-amino-acid polypeptide reads, in one-letter code: Ras-related protein Rab-7a (207 aa).

Threonine 2 carries the post-translational modification N-acetylthreonine. GTP is bound by residues serine 17, glycine 18, valine 19, glycine 20, lysine 21, threonine 22, serine 23, serine 34, asparagine 35, tyrosine 37, and threonine 40. Residue threonine 22 coordinates Mg(2+). The short motif at 28 to 41 (YVNKKFSNQYKATI) is the Switch 1 element. Mg(2+) contacts are provided by threonine 40 and aspartate 63. Glycine 66 provides a ligand contact to GTP. Residues 67 to 82 (QERFQSLGVAFYRGAD) carry the Switch 2 motif. At serine 72 the chain carries Phosphoserine. The GTP site is built by asparagine 125, lysine 126, aspartate 128, alanine 156, and lysine 157. Residues lysine 191 and lysine 194 each participate in a glycyl lysine isopeptide (Lys-Gly) (interchain with G-Cter in ubiquitin) cross-link. S-geranylgeranyl cysteine attachment occurs at residues cysteine 205 and cysteine 207. Cysteine 207 carries the post-translational modification Cysteine methyl ester.

Belongs to the small GTPase superfamily. Rab family. Interacts with NTRK1/TRKA. Interacts with RILP. Interacts with PSMA7. Interacts with RNF115. Interacts with and FYCO1. Interacts with the PIK3C3/VPS34-PIK3R4 complex. The GTP-bound form interacts with OSBPL1A. The GTP-bound form interacts with RAC1. Interacts with CLN3. Interacts with CHM, the substrate-binding subunit of the Rab geranylgeranyltransferase complex. Interacts with C9orf72. Does not interact with HPS4 and the BLOC-3 complex (heterodimer of HPS1 and HPS4). Interacts with CLN5. Interacts with PLEKHM1 (via N- and C-terminus). Interacts with PRPH; the interaction is direct. Interacts with VPS13A. The GDP-bound form interacts with RIMOC1. Interacts with the MON1A-CCZ1B complex and this interaction is enhanced in the presence of RIMOC1. Interacts with VPS39 and VPS41. Forms a ternary complex with LAMP2 and RUFY4; the interaction with LAMP2 is mediated by RUFY4 (via RUN and coiled coil domains). Mg(2+) serves as cofactor. In terms of processing, deubiquitination at Lys-191 and Lys-194 by USP32. Phosphorylated at Ser-72 by LRRK1; phosphorylation is dependent on protein kinase C (PKC) activation of LRRK1. Post-translationally, prenylated. Prenylation is required for association with cellular membranes. In terms of tissue distribution, expressed in osteoclasts and in neurons.

The protein localises to the cytoplasmic vesicle. The protein resides in the phagosome membrane. It localises to the late endosome membrane. It is found in the lysosome membrane. Its subcellular location is the melanosome membrane. The protein localises to the autophagosome membrane. The protein resides in the lipid droplet. It localises to the endosome membrane. It is found in the mitochondrion membrane. The catalysed reaction is GTP + H2O = GDP + phosphate + H(+). With respect to regulation, regulated by guanine nucleotide exchange factors (GEFs) which promote the exchange of bound GDP for free GTP. Regulated by GTPase activating proteins (GAPs) which increase the GTP hydrolysis activity. Inhibited by GDP dissociation inhibitors (GDIs). Functionally, the small GTPases Rab are key regulators of intracellular membrane trafficking, from the formation of transport vesicles to their fusion with membranes. Rabs cycle between an inactive GDP-bound form and an active GTP-bound form that is able to recruit to membranes different sets of downstream effectors directly responsible for vesicle formation, movement, tethering and fusion. In its active state, RAB7A binds to a variety of effector proteins playing a key role in the regulation of endo-lysosomal trafficking. Governs early-to-late endosomal maturation, microtubule minus-end as well as plus-end directed endosomal migration and positioning, and endosome-lysosome transport through different protein-protein interaction cascades. Also plays a central role in growth-factor-mediated cell signaling, nutrient-transporter-mediated nutrient uptake, neurotrophin transport in the axons of neurons and lipid metabolism. Also involved in regulation of some specialized endosomal membrane trafficking, such as maturation of melanosomes, pathogen-induced phagosomes (or vacuoles) and autophagosomes. Plays a role in the maturation and acidification of phagosomes that engulf pathogens, such as S.aureus and Mycobacteria. Plays a role in the fusion of phagosomes with lysosomes. In concert with RAC1, plays a role in regulating the formation of RBs (ruffled borders) in osteoclasts. Controls the endosomal trafficking and neurite outgrowth signaling of NTRK1/TRKA. Regulates the endocytic trafficking of the EGF-EGFR complex by regulating its lysosomal degradation. Involved in the ADRB2-stimulated lipolysis through lipophagy, a cytosolic lipase-independent autophagic pathway. Required for the exosomal release of SDCBP, CD63 and syndecan. Required for vesicular trafficking and cell surface expression of ACE2. May play a role in PRPH neuronal intermediate filament assembly. This chain is Ras-related protein Rab-7a, found in Rattus norvegicus (Rat).